The chain runs to 436 residues: GTPase Der (436 aa).

EngA-type G domains lie at 4–167 (PTVA…PVEE) and 175–351 (IRFS…ESQN). GTP-binding positions include 10–17 (GRPNVGKS), 57–61 (DTGGI), 119–122 (NKVD), 181–188 (GRPNVGKS), 229–233 (DTAGM), and 294–297 (NKWD). The KH-like domain occupies 352 to 436 (KRIPSAVLND…PIHLIARKRK (85 aa)).

The protein belongs to the TRAFAC class TrmE-Era-EngA-EngB-Septin-like GTPase superfamily. EngA (Der) GTPase family. Associates with the 50S ribosomal subunit.

GTPase that plays an essential role in the late steps of ribosome biogenesis. The sequence is that of GTPase Der from Streptococcus uberis (strain ATCC BAA-854 / 0140J).